The chain runs to 332 residues: Methionine import ATP-binding protein MetN (332 aa).

The ABC transporter domain maps to 2–241 (IELKGLTKVF…PGSRLRELFY (240 aa)). 38 to 45 (GQSGAGKS) is a binding site for ATP.

It belongs to the ABC transporter superfamily. Methionine importer (TC 3.A.1.24) family. As to quaternary structure, the complex is composed of two ATP-binding proteins (MetN), two transmembrane proteins (MetI) and a solute-binding protein (MetQ).

The protein resides in the cell membrane. It catalyses the reaction L-methionine(out) + ATP + H2O = L-methionine(in) + ADP + phosphate + H(+). The enzyme catalyses D-methionine(out) + ATP + H2O = D-methionine(in) + ADP + phosphate + H(+). Functionally, part of the ABC transporter complex MetNIQ involved in methionine import. Responsible for energy coupling to the transport system. The polypeptide is Methionine import ATP-binding protein MetN (Symbiobacterium thermophilum (strain DSM 24528 / JCM 14929 / IAM 14863 / T)).